The primary structure comprises 500 residues: Glycerol kinase (500 aa).

An ADP-binding site is contributed by T11. The ATP site is built by T11, T12, and S13. Residue T11 participates in sn-glycerol 3-phosphate binding. R15 is an ADP binding site. Sn-glycerol 3-phosphate is bound by residues R81, E82, Y133, and D242. Residues R81, E82, Y133, D242, and Q243 each coordinate glycerol. Residues T264 and G307 each coordinate ADP. 4 residues coordinate ATP: T264, G307, Q311, and G411. G411 provides a ligand contact to ADP.

The protein belongs to the FGGY kinase family.

It carries out the reaction glycerol + ATP = sn-glycerol 3-phosphate + ADP + H(+). The protein operates within polyol metabolism; glycerol degradation via glycerol kinase pathway; sn-glycerol 3-phosphate from glycerol: step 1/1. With respect to regulation, inhibited by fructose 1,6-bisphosphate (FBP). Its function is as follows. Key enzyme in the regulation of glycerol uptake and metabolism. Catalyzes the phosphorylation of glycerol to yield sn-glycerol 3-phosphate. In Bradyrhizobium sp. (strain ORS 278), this protein is Glycerol kinase.